The primary structure comprises 134 residues: Agouti-related protein (134 aa).

An N-terminal signal peptide occupies residues methionine 1–glycine 20. Residues alanine 21–arginine 84 constitute a propeptide that is removed on maturation. Cystine bridges form between cysteine 89/cysteine 104, cysteine 96/cysteine 110, cysteine 103/cysteine 121, cysteine 107/cysteine 131, and cysteine 112/cysteine 119. The region spanning cysteine 89–cysteine 131 is the Agouti domain. Positions arginine 113–phenylalanine 115 are interaction with melanocortin receptors.

In terms of assembly, interacts with melanocortin receptors MC3R, MC4R and MC5R.

The protein localises to the secreted. The protein resides in the golgi apparatus lumen. Functionally, plays a role in weight homeostasis. Involved in the control of feeding behavior through the central melanocortin system. Acts as alpha melanocyte-stimulating hormone antagonist by inhibiting cAMP production mediated by stimulation of melanocortin receptors within the hypothalamus and adrenal gland. Has very low activity with MC5R. Is an inverse agonist for MC3R and MC4R being able to suppress their constitutive activity. It promotes MC3R and MC4R endocytosis in an arrestin-dependent manner. The chain is Agouti-related protein (AGRP) from Bos taurus (Bovine).